Reading from the N-terminus, the 292-residue chain is MEEKSEDCKVPEDLFNGLKVADPQEGESASPMVSDPKGQHCQSKLPKAAEAHPQDDHVEEECFHDCSASFEEEQPGAHVAGSKASDDSSSELDEEYLIELEKNMPEEEKQKRREESAKLKEEGNERFKRGDYMEAESSYSQALQMCPACFQKDRSVLFSNRAAARMKQDKKETAITDCSKAIQLNPTYIRAILRRAELYEKTDKLDEALEDYKSVLEKDPSVHQAREACMRLPKQIEERNERLKEEMLGKLKDLGNLVLRPFGLSTENFQIKQDSSTGSYSINFVQNPNNNR.

Composition is skewed to basic and acidic residues over residues 1-12 (MEEKSEDCKVPE) and 47-64 (KAAEAHPQDDHVEEECFH). Residues 1–125 (MEEKSEDCKV…SAKLKEEGNE (125 aa)) form a disordered region. Residues 88-98 (SSSELDEEYLI) are compositionally biased toward acidic residues. S90 is modified (phosphoserine). The segment covering 99-125 (ELEKNMPEEEKQKRREESAKLKEEGNE) has biased composition (basic and acidic residues). TPR repeat units follow at residues 116–149 (SAKLKEEGNERFKRGDYMEAESSYSQALQMCPAC), 155–188 (SVLFSNRAAARMKQDKKETAITDCSKAIQLNPTY), and 189–222 (IRAILRRAELYEKTDKLDEALEDYKSVLEKDPSV).

As to quaternary structure, interacts with the GAP domain of NF1. Interacts (via TPR repeats) with HSP90AA1 and HSPA8.

This Mus musculus (Mouse) protein is Tetratricopeptide repeat protein 1 (Ttc1).